The chain runs to 65 residues: Large ribosomal subunit protein bL35 (65 aa).

The span at 1-15 (MPKLKTRKAAAKRFR) shows a compositional bias: basic residues. A disordered region spans residues 1–28 (MPKLKTRKAAAKRFRQTGTGKFTRRKAN).

This sequence belongs to the bacterial ribosomal protein bL35 family.

This Cyanothece sp. (strain PCC 7425 / ATCC 29141) protein is Large ribosomal subunit protein bL35.